The primary structure comprises 938 residues: Isoleucine--tRNA ligase (938 aa).

The short motif at 58 to 68 is the 'HIGH' region element; that stretch reads PYANGNIHMGH. Residue Glu-566 coordinates L-isoleucyl-5'-AMP. The short motif at 607–611 is the 'KMSKS' region element; sequence KMSKS. Lys-610 is an ATP binding site. Zn(2+) is bound by residues Cys-906, Cys-909, Cys-926, and Cys-929.

The protein belongs to the class-I aminoacyl-tRNA synthetase family. IleS type 1 subfamily. As to quaternary structure, monomer. Requires Zn(2+) as cofactor.

The protein localises to the cytoplasm. The catalysed reaction is tRNA(Ile) + L-isoleucine + ATP = L-isoleucyl-tRNA(Ile) + AMP + diphosphate. Its function is as follows. Catalyzes the attachment of isoleucine to tRNA(Ile). As IleRS can inadvertently accommodate and process structurally similar amino acids such as valine, to avoid such errors it has two additional distinct tRNA(Ile)-dependent editing activities. One activity is designated as 'pretransfer' editing and involves the hydrolysis of activated Val-AMP. The other activity is designated 'posttransfer' editing and involves deacylation of mischarged Val-tRNA(Ile). The protein is Isoleucine--tRNA ligase of Nitratidesulfovibrio vulgaris (strain DP4) (Desulfovibrio vulgaris).